The following is a 1120-amino-acid chain: Vacuolar cation-chloride cotransporter 1 (1120 aa).

The interval 1–21 (MVSRFYQIPGTHRPSSAISSS) is disordered. Residues 1–62 (MVSRFYQIPG…YDPDNPNKDK (62 aa)) lie on the Cytoplasmic side of the membrane. Phosphoserine is present on Ser-34. A helical membrane pass occupies residues 63–83 (LGTYDGVFVPTALNVLSILMF). Residues 84–85 (LR) lie on the Vacuolar side of the membrane. A helical membrane pass occupies residues 86-106 (FGFILGQLGIICTIGLLLLSY). The Cytoplasmic segment spans residues 107–145 (TINLLTTLSISAISTNGTVRGGGAYYMISRSLGPEFGGS). A helical membrane pass occupies residues 146 to 166 (IGLVFFLGQVFNAGMNAVGII). The Vacuolar portion of the chain corresponds to 167-193 (EPLLYNLGYSAQGEPPAALGELLPRGH). The helical transmembrane segment at 194 to 214 (WHEFTYATVILFLCFSVAFVG) threads the bilayer. The Cytoplasmic segment spans residues 215–221 (SQTVSRA). Residues 222 to 242 (GNILFLVLAASIFSIPLSALI) form a helical membrane-spanning segment. Topologically, residues 243–283 (RSPFTEGGISYTGPSWQTFHDNLLPHLTKGAAGSLLKGKET) are vacuolar. A helical membrane pass occupies residues 284–304 (FNDLFGVFFPATAGIFAGAGM). At 305–317 (SSELRKPSKSIPK) the chain is on the cytoplasmic side. Residues 318-338 (GTLWGLLFTFICYAVVVFSMG) form a helical membrane-spanning segment. Over 339–360 (CSIPRRSLYDEVQIIQTISSVQ) the chain is Vacuolar. The helical transmembrane segment at 361-381 (WVIFMGEMATSLFSIIVGMLG) threads the bilayer. At 382–393 (AAYVLEAIAKDN) the chain is on the cytoplasmic side. A helical membrane pass occupies residues 394–414 (IIPGLEIFAHSPLYSLIFTWI). Topologically, residues 415–430 (LTQLCLFSDVNKIATF) are vacuolar. The chain crosses the membrane as a helical span at residues 431-451 (ITMTFLMTFVVMNLACFLLGI). The Cytoplasmic segment spans residues 452-462 (SSAPNFRPSFK). A helical membrane pass occupies residues 463 to 482 (YFNRYTTAIGALLSVVAMLI). Over 483-487 (VDGIS) the chain is Vacuolar. A helical transmembrane segment spans residues 488 to 506 (ASVLFLAMILLFLFIHYFS). Over 507–1120 (PPKSWGDVSQ…SQTMTVTTAL (614 aa)) the chain is Cytoplasmic. Ser-654, Ser-915, and Ser-918 each carry phosphoserine.

This sequence belongs to the SLC12A transporter family.

Its subcellular location is the vacuole membrane. Catalyzes the coordinated symport of chloride with potassium ions across the vacuolar membrane. Involved in vacuolar osmoregulation. The chain is Vacuolar cation-chloride cotransporter 1 from Saccharomyces cerevisiae (strain ATCC 204508 / S288c) (Baker's yeast).